A 94-amino-acid chain; its full sequence is DNA-directed RNA polymerase subunit Rpo11 (94 aa).

This sequence belongs to the archaeal Rpo11/eukaryotic RPB11/RPC19 RNA polymerase subunit family. As to quaternary structure, part of the RNA polymerase complex.

The protein resides in the cytoplasm. It catalyses the reaction RNA(n) + a ribonucleoside 5'-triphosphate = RNA(n+1) + diphosphate. In terms of biological role, DNA-dependent RNA polymerase (RNAP) catalyzes the transcription of DNA into RNA using the four ribonucleoside triphosphates as substrates. The protein is DNA-directed RNA polymerase subunit Rpo11 of Halobacterium salinarum (strain ATCC 700922 / JCM 11081 / NRC-1) (Halobacterium halobium).